We begin with the raw amino-acid sequence, 888 residues long: Endochitinase A1 (888 aa).

The first 22 residues, 1 to 22 (MVSSKLSFVATAVAALAPLASA), serve as a signal peptide directing secretion. In terms of domain architecture, GH18 spans 29–338 (SNLAIYWGQG…DHMKDILLHC (310 aa)). Catalysis depends on E174, which acts as the Proton donor. 3 disordered regions span residues 338-631 (CDPS…TTTA), 743-799 (PVTE…VSTS), and 813-855 (PLIL…YTQE). Over residues 344-617 (VTSSSAIPSS…STDESSTTVG (274 aa)) the composition is skewed to low complexity. An N-linked (GlcNAc...) asparagine glycan is attached at N622. Positions 764–775 (EGSNPTQPSGAS) are enriched in polar residues. Residue N780 is glycosylated (N-linked (GlcNAc...) asparagine). Over residues 835–855 (PSGQNSGSSSHVPIPPSYTQE) the composition is skewed to polar residues. Residue G863 is the site of GPI-anchor amidated glycine attachment. A propeptide spans 864-888 (AASRVTGLGHGLVLTVLTLSAFFVL) (removed in mature form).

It belongs to the glycosyl hydrolase 18 family. Chitinase class III subfamily.

Its subcellular location is the cell membrane. The protein resides in the secreted. It is found in the cell wall. It carries out the reaction Random endo-hydrolysis of N-acetyl-beta-D-glucosaminide (1-&gt;4)-beta-linkages in chitin and chitodextrins.. The cyclic peptide natural product argifin acts as a specific inhibitor. GPI-anchored chitinase involved in the degradation of chitin, a component of the cell walls of fungi and exoskeletal elements of some animals (including worms and arthropods). Required to reshape the cell wall at the sites where cell wall remodeling and/or cell wall maturation actively take place such as sites of conidia formation. The polypeptide is Endochitinase A1 (chiA1) (Aspergillus fumigatus (strain ATCC MYA-4609 / CBS 101355 / FGSC A1100 / Af293) (Neosartorya fumigata)).